The following is a 668-amino-acid chain: Probable serine/threonine-protein kinase abkB (668 aa).

Disordered stretches follow at residues 88–111 and 132–162; these read YTNI…KTTA and EVEE…DDNK. The segment covering 91 to 105 has biased composition (polar residues); sequence IGGTSPNRQSVPENS. Residues 131-163 adopt a coiled-coil conformation; the sequence is KEVEEEIIDKNERGKEQEQENKQQKEQKDDNKS. The span at 138–162 shows a compositional bias: basic and acidic residues; the sequence is IDKNERGKEQEQENKQQKEQKDDNK. In terms of domain architecture, Protein kinase spans 314 to 668; the sequence is DFERLPINSA…EIPSTYHHHH (355 aa). Residues 320-328 and Lys-346 contribute to the ATP site; that span reads INSASLAQV. Asp-478 functions as the Proton acceptor in the catalytic mechanism.

Belongs to the protein kinase superfamily. ADCK protein kinase family.

The chain is Probable serine/threonine-protein kinase abkB (abkB) from Dictyostelium discoideum (Social amoeba).